The primary structure comprises 399 residues: Tryptophan synthase beta chain (399 aa).

Lysine 90 carries the N6-(pyridoxal phosphate)lysine modification.

This sequence belongs to the TrpB family. Tetramer of two alpha and two beta chains. Requires pyridoxal 5'-phosphate as cofactor.

The enzyme catalyses (1S,2R)-1-C-(indol-3-yl)glycerol 3-phosphate + L-serine = D-glyceraldehyde 3-phosphate + L-tryptophan + H2O. Its pathway is amino-acid biosynthesis; L-tryptophan biosynthesis; L-tryptophan from chorismate: step 5/5. The beta subunit is responsible for the synthesis of L-tryptophan from indole and L-serine. This chain is Tryptophan synthase beta chain, found in Lactiplantibacillus plantarum (strain ATCC BAA-793 / NCIMB 8826 / WCFS1) (Lactobacillus plantarum).